Reading from the N-terminus, the 476-residue chain is E1B 55 kDa protein (476 aa).

2 disordered regions span residues 1 to 20 and 42 to 95; these read MERP…GNGS and FGSS…KMEN. 2 positions are modified to phosphoserine: Ser472 and Ser473.

It belongs to the adenoviridae E1B 55 kDa protein family. As to quaternary structure, interacts with host PML-4 and PML-5; this interaction promotes efficient subnuclear targeting of E1B-55K to PML nuclear bodies. Interacts with E4-ORF3 protein. Interacts with E4-ORF6 protein.

It is found in the host nucleus. It localises to the host cytoplasm. In terms of biological role, plays a major role to prevent cellular inhibition of viral genome replication. Assembles an SCF-like E3 ubiquitin ligase complex based on the cellular proteins ELOB, ELOC, CUL5 and RBX1, in cooperation with viral E4orf6. This viral RING-type ligase ubiquitinates cellular substrates and targets them to proteasomal degradation: TP53/p53, LIG4, MRE11-RAD50-NBS1 (MRN) complex, ITGA3, DAXX and BLM. E1B-55K probably acts as the substrate-specific adapter of the SCF-like E3 ubiquitin ligase complex. Degradation of host TP53/p53 activity is essential for preventing E1A-induced TP53 accumulation that would otherwise lead to cell apoptosis and growth arrest. E1B-55K also inactivates TP53 transcription-factor activity by binding its transactivation domain. E1B-55K also functions as a SUMO1 E3 ligase for TP53 which causes the latter to be sequestered in promyelocytic leukemia (PML) nuclear bodies thereby contributing to maximal inhibition of TP53 function. The polypeptide is E1B 55 kDa protein (Human adenovirus F serotype 40 (HAdV-40)).